The following is a 373-amino-acid chain: Flagellar P-ring protein (373 aa).

Positions 1 to 28 (MPSVSAVILKLAAAALSALLLSGVAANA) are cleaved as a signal peptide.

The protein belongs to the FlgI family. The basal body constitutes a major portion of the flagellar organelle and consists of four rings (L,P,S, and M) mounted on a central rod.

The protein localises to the periplasm. The protein resides in the bacterial flagellum basal body. In terms of biological role, assembles around the rod to form the L-ring and probably protects the motor/basal body from shearing forces during rotation. This chain is Flagellar P-ring protein, found in Rhodopseudomonas palustris (strain HaA2).